The primary structure comprises 194 residues: 3-isopropylmalate dehydratase small subunit (194 aa).

This sequence belongs to the LeuD family. LeuD type 1 subfamily. Heterodimer of LeuC and LeuD.

It carries out the reaction (2R,3S)-3-isopropylmalate = (2S)-2-isopropylmalate. Its pathway is amino-acid biosynthesis; L-leucine biosynthesis; L-leucine from 3-methyl-2-oxobutanoate: step 2/4. Catalyzes the isomerization between 2-isopropylmalate and 3-isopropylmalate, via the formation of 2-isopropylmaleate. This Leuconostoc mesenteroides subsp. mesenteroides (strain ATCC 8293 / DSM 20343 / BCRC 11652 / CCM 1803 / JCM 6124 / NCDO 523 / NBRC 100496 / NCIMB 8023 / NCTC 12954 / NRRL B-1118 / 37Y) protein is 3-isopropylmalate dehydratase small subunit.